The chain runs to 82 residues: Delta-ctenitoxin-Pn2a (82 aa).

An N-terminal signal peptide occupies residues 1 to 17 (MKVAILFLSILVLAVAS). Residues 18–34 (ESIEESRDDFAVEELGR) constitute a propeptide that is removed on maturation. 5 cysteine pairs are disulfide-bonded: Cys37–Cys51, Cys44–Cys57, Cys48–Cys80, Cys50–Cys65, and Cys59–Cys63.

This sequence belongs to the neurotoxin 03 (Tx2) family. 06 subfamily. Expressed by the venom gland.

The protein localises to the secreted. Functionally, toxin that is known to potentiate erectile function. It binds voltage-dependently to sodium channels (Nav), inhibits the inactivation of the activated channels and decreases the peak inward current. The toxin delays inactivation of Nav1.2/SCN2A, Nav1.3/SCN3A, Nav1.4/SCN4A and Nav1.8/SCN10A, slows the inactivation process and decreases the sodium peak amplitude of Nav1.5/SCN5A and Nav1.6/SCN8A. In vivo, it enhances erectile function by inducing the release of nictric oxide (NO): it slows the sodium current, leading to depolarization, which leads to an increase in calcium influx (probably via activation of N-type calcium channels) which in turn activates neuronal NO synthase (nNOS/NOS1), inducing nitric oxide (NO) production. In a final step, NO activates soluble guanylate cyclase (GUCY1A1/GUCY1B1) which in turn increases cGMP formation, resulting in penile erection. It is noteworthy that the toxin does not provoke erection by inhibiting phosphodiesterase type 5 (PDE5A), an enzyme that hydrolysis cGMP. In vivo, it also causes scratching, lacrimation, hypersalivation, sweating and agitation followed by spastic paralysis of the anterior and posterior extremities and death at dose levels of 0.79 mg/mouse. It is insecticidal to the larval and adult forms of the house fly. The toxin also improves cavernosal relaxation in different models where erectile dysfunction is observed, such as deoxycorticosterone-acetate (DOCA)-salt hypertensive rats, mice models for type-1 diabetes, as well as elderly rats. This is Delta-ctenitoxin-Pn2a from Phoneutria nigriventer (Brazilian armed spider).